The sequence spans 283 residues: Aquaporin PIP2-5 (283 aa).

Transmembrane regions (helical) follow at residues 37–57 (AVIA…ATVI) and 74–94 (CGGV…FILV). An NPA 1 motif is present at residues 106–108 (NPA). Transmembrane regions (helical) follow at residues 125–145 (ILYI…VKGF), 167–187 (GTGL…VFSA), and 199–219 (VPVL…LATI). The short motif at 227–229 (NPA) is the NPA 2 element. Residues 249-269 (IFWVGPFIGAAIAALYHQIVL) traverse the membrane as a helical segment.

Belongs to the MIP/aquaporin (TC 1.A.8) family. PIP (TC 1.A.8.11) subfamily. In terms of tissue distribution, expressed in roots.

Its subcellular location is the cell membrane. In terms of biological role, water channel required to facilitate the transport of water across cell membrane. May play a role in root water uptake. This is Aquaporin PIP2-5 (PIP2-5) from Oryza sativa subsp. japonica (Rice).